Reading from the N-terminus, the 238-residue chain is MEKRQELYAGKAKSVFRTDDPDKMVLVFRDDTSAFDGKRIEQLDRKGMVNNKFNAFIMTKLQEAGIPTHFEKLLSDTESLVKCLDMIPVECVVRNVAAGSLCRRLGVEEGITLTPPTFELFLKNDALGDPMINESHVESFGWAKASDLAKAKELTFKVNDVLKAIFAEGGMILVDYKLEFGLYKGEVLLGDEFSPDGCRLWDAKTKEKLDKDRFRQGLGGVIEAYEDVGRRIGIDFDA.

It belongs to the SAICAR synthetase family.

It catalyses the reaction 5-amino-1-(5-phospho-D-ribosyl)imidazole-4-carboxylate + L-aspartate + ATP = (2S)-2-[5-amino-1-(5-phospho-beta-D-ribosyl)imidazole-4-carboxamido]succinate + ADP + phosphate + 2 H(+). It participates in purine metabolism; IMP biosynthesis via de novo pathway; 5-amino-1-(5-phospho-D-ribosyl)imidazole-4-carboxamide from 5-amino-1-(5-phospho-D-ribosyl)imidazole-4-carboxylate: step 1/2. This chain is Phosphoribosylaminoimidazole-succinocarboxamide synthase, found in Marinomonas sp. (strain MWYL1).